The sequence spans 324 residues: Phospho-N-acetylmuramoyl-pentapeptide-transferase (324 aa).

10 consecutive transmembrane segments (helical) span residues 5 to 25 (GLLV…PLFI), 52 to 72 (PTMG…IMAI), 77 to 97 (LGAE…IGFL), 122 to 142 (VIAI…YIMI), 149 to 169 (FELG…GSNA), 176 to 196 (LDGL…IIAV), 201 to 221 (FGVA…LVFN), 227 to 247 (VFMG…VAIL), 253 to 273 (LLVI…IQVI), and 302 to 322 (VVVT…YIGV).

Belongs to the glycosyltransferase 4 family. MraY subfamily. The cofactor is Mg(2+).

The protein resides in the cell membrane. The catalysed reaction is UDP-N-acetyl-alpha-D-muramoyl-L-alanyl-gamma-D-glutamyl-meso-2,6-diaminopimeloyl-D-alanyl-D-alanine + di-trans,octa-cis-undecaprenyl phosphate = di-trans,octa-cis-undecaprenyl diphospho-N-acetyl-alpha-D-muramoyl-L-alanyl-D-glutamyl-meso-2,6-diaminopimeloyl-D-alanyl-D-alanine + UMP. Its pathway is cell wall biogenesis; peptidoglycan biosynthesis. Functionally, catalyzes the initial step of the lipid cycle reactions in the biosynthesis of the cell wall peptidoglycan: transfers peptidoglycan precursor phospho-MurNAc-pentapeptide from UDP-MurNAc-pentapeptide onto the lipid carrier undecaprenyl phosphate, yielding undecaprenyl-pyrophosphoryl-MurNAc-pentapeptide, known as lipid I. This Bacillus mycoides (strain KBAB4) (Bacillus weihenstephanensis) protein is Phospho-N-acetylmuramoyl-pentapeptide-transferase.